A 254-amino-acid chain; its full sequence is Glucosamine-6-phosphate deaminase (254 aa).

Residue D63 is the Proton acceptor; for enolization step of the active site. Residue N129 is the For ring-opening step of the active site. H131 functions as the Proton acceptor; for ring-opening step in the catalytic mechanism. Catalysis depends on E136, which acts as the For ring-opening step.

It belongs to the glucosamine/galactosamine-6-phosphate isomerase family. NagB subfamily.

It carries out the reaction alpha-D-glucosamine 6-phosphate + H2O = beta-D-fructose 6-phosphate + NH4(+). The protein operates within amino-sugar metabolism; N-acetylneuraminate degradation; D-fructose 6-phosphate from N-acetylneuraminate: step 5/5. Catalyzes the reversible isomerization-deamination of glucosamine 6-phosphate (GlcN6P) to form fructose 6-phosphate (Fru6P) and ammonium ion. The polypeptide is Glucosamine-6-phosphate deaminase (Exiguobacterium sp. (strain ATCC BAA-1283 / AT1b)).